The chain runs to 490 residues: Sushi domain-containing protein 4 (490 aa).

Positions 1-20 are disordered; sequence MYHGMNPSNGDGFLEQQLQQ. Residues 1–41 form the signal peptide; the sequence is MYHGMNPSNGDGFLEQQLQQQQPQSPQRLLAVILWFQLALC. Topologically, residues 42-319 are extracellular; that stretch reads FGPAQLTGGF…PSTHETLLTT (278 aa). 4 consecutive Sushi domains span residues 55–119, 120–179, 178–239, and 241–304; these read NVCA…VCIQ, EDCR…ICQG, QGCL…RCLA, and EVCP…YCIK. 8 disulfide bridges follow: cysteine 57/cysteine 99, cysteine 85/cysteine 117, cysteine 122/cysteine 165, cysteine 147/cysteine 177, cysteine 180/cysteine 224, cysteine 210/cysteine 237, cysteine 243/cysteine 289, and cysteine 274/cysteine 302. N-linked (GlcNAc...) asparagine glycans are attached at residues asparagine 104 and asparagine 134. N-linked (GlcNAc...) asparagine glycosylation occurs at asparagine 192. A helical transmembrane segment spans residues 320–340; sequence WKIVAFTATSVLLVLLLVILA. Residues 341–490 lie on the Cytoplasmic side of the membrane; the sequence is RMFQTKFKAH…DEIPLMEEDP (150 aa). Residues 394 to 490 form a disordered region; that stretch reads YPASVGQGCP…DEIPLMEEDP (97 aa). 2 stretches are compositionally biased toward polar residues: residues 430–444 and 461–475; these read CDST…QSLY and DTIS…STSP. Residues 479 to 490 show a composition bias toward acidic residues; the sequence is IADEIPLMEEDP.

High expression in brain and eye, with weaker expression in spinal cord and testis. Detected in white matter of brain and in the outer segments of photoreceptors.

The protein resides in the membrane. In terms of biological role, acts as a complement inhibitor by disrupting the formation of the classical C3 convertase. Isoform 3 inhibits the classical complement pathway, while membrane-bound isoform 1 inhibits deposition of C3b via both the classical and alternative complement pathways. The chain is Sushi domain-containing protein 4 (Susd4) from Mus musculus (Mouse).